Reading from the N-terminus, the 403-residue chain is Soluble calcium-activated nucleotidase 1 (403 aa).

The Cytoplasmic segment spans residues 1-44 (MPIQPFDQREWNEPMHSLRISVGGLPVLASMTKATDPRFRPRWR). The chain crosses the membrane as a helical; Signal-anchor for type II membrane protein span at residues 45–61 (VILTSFVGAALLWLLYS). Residues 62–403 (HHQGPVPGRP…TVKYEGIEFI (342 aa)) are Lumenal-facing. The N-linked (GlcNAc...) asparagine glycan is linked to N90. Positions 170, 171, 217, 286, 347, and 398 each coordinate Ca(2+).

The protein belongs to the apyrase family. In terms of assembly, monomer. Homodimer; dimerization is Ca(2+)-dependent. It depends on Ca(2+) as a cofactor.

Its subcellular location is the endoplasmic reticulum membrane. It localises to the golgi apparatus. It is found in the golgi stack membrane. The enzyme catalyses a ribonucleoside 5'-diphosphate + H2O = a ribonucleoside 5'-phosphate + phosphate + H(+). Calcium-dependent nucleotidase with a preference for UDP. The order of activity with different substrates is UDP &gt; GDP &gt; IDP &gt;&gt; UTP &gt; CDP = GTP = ITP. Has very low activity towards ADP and even lower activity towards ATP. Does not hydrolyze AMP and GMP. Involved in proteoglycan synthesis. The protein is Soluble calcium-activated nucleotidase 1 (Cant1) of Mus musculus (Mouse).